The sequence spans 734 residues: Probable carboxypeptidase X1 (734 aa).

The first 20 residues, 1–20 (MWGLLLALAAFAPAVGPALG), serve as a signal peptide directing secretion. Residues 30 to 62 (AQPGTTKVPGSTPALHSSPAQPPAETANGTSEQ) are disordered. Positions 32-48 (PGTTKVPGSTPALHSSP) are enriched in polar residues. Residues Asn-57, Asn-210, Asn-220, and Asn-318 are each glycosylated (N-linked (GlcNAc...) asparagine). The region spanning 113–274 (TGCPPLGLES…PCLRAEILAC (162 aa)) is the F5/8 type C domain. A disulfide bridge connects residues Cys-115 and Cys-274. The Peptidase M14 domain occupies 298 to 621 (QHHNYKAMRK…DALLTYLEQV (324 aa)). Residues His-360 and Glu-363 each coordinate Zn(2+). 2 N-linked (GlcNAc...) asparagine glycosylation sites follow: Asn-428 and Asn-472. A Zn(2+)-binding site is contributed by His-498. Glu-591 serves as the catalytic Proton donor/acceptor.

The protein belongs to the peptidase M14 family. Zn(2+) is required as a cofactor.

The protein resides in the secreted. Functionally, may be involved in cell-cell interactions. No carboxypeptidase activity was found yet. The sequence is that of Probable carboxypeptidase X1 (CPXM1) from Homo sapiens (Human).